The sequence spans 198 residues: Neutrophil gelatinase-associated lipocalin (198 aa).

The N-terminal stretch at 1–20 (MPLGLLWLGLALLGALHAQA) is a signal peptide. Gln-21 is subject to Pyrrolidone carboxylic acid. 72 to 74 (YAT) contacts a carboxymycobactin. N-linked (GlcNAc...) asparagine glycosylation is present at Asn-85. A disulfide bridge links Cys-96 with Cys-195. Tyr-126 contacts enterobactin. A carboxymycobactin-binding residues include Lys-145, Lys-154, and Tyr-158. Lys-154 contacts enterobactin.

The protein belongs to the calycin superfamily. Lipocalin family. As to quaternary structure, monomer. Homodimer; disulfide-linked. Heterodimer; disulfide-linked with MMP9. In terms of tissue distribution, detected in neutrophils (at protein level). Expressed in bone marrow and in tissues that are prone to exposure to microorganism. High expression is found in bone marrow as well as in uterus, prostate, salivary gland, stomach, appendix, colon, trachea and lung. Expressed in the medullary tubules of the kidney. Not found in the small intestine or peripheral blood leukocytes.

Its subcellular location is the secreted. The protein localises to the cytoplasmic granule lumen. It localises to the cytoplasmic vesicle lumen. Functionally, iron-trafficking protein involved in multiple processes such as apoptosis, innate immunity and renal development. Binds iron through association with 2,3-dihydroxybenzoic acid (2,3-DHBA), a siderophore that shares structural similarities with bacterial enterobactin, and delivers or removes iron from the cell, depending on the context. Iron-bound form (holo-24p3) is internalized following binding to the SLC22A17 (24p3R) receptor, leading to release of iron and subsequent increase of intracellular iron concentration. In contrast, association of the iron-free form (apo-24p3) with the SLC22A17 (24p3R) receptor is followed by association with an intracellular siderophore, iron chelation and iron transfer to the extracellular medium, thereby reducing intracellular iron concentration. Involved in apoptosis due to interleukin-3 (IL3) deprivation: iron-loaded form increases intracellular iron concentration without promoting apoptosis, while iron-free form decreases intracellular iron levels, inducing expression of the proapoptotic protein BCL2L11/BIM, resulting in apoptosis. Involved in innate immunity; limits bacterial proliferation by sequestering iron bound to microbial siderophores, such as enterobactin. Can also bind siderophores from M.tuberculosis. The protein is Neutrophil gelatinase-associated lipocalin (LCN2) of Homo sapiens (Human).